The primary structure comprises 557 residues: IgE-binding protein (557 aa).

The tract at residues 113 to 172 is disordered; sequence DGLGKPALSSSEAGEESSSEETDWEEEAAHYQPANWSRKKPKAAGEGQFADWPQGSRLQG. The segment covering 125–138 has biased composition (acidic residues); it reads AGEESSSEETDWEE. Positions 344–534 constitute an Integrase catalytic domain; that stretch reads TAIRPGRRSR…TAAERHVQSQ (191 aa).

The sequence is that of IgE-binding protein (Iap) from Mus musculus (Mouse).